The sequence spans 614 residues: DNA double-strand break repair protein Mre11 (614 aa).

Mn(2+)-binding residues include aspartate 12, histidine 14, aspartate 53, and asparagine 88. Histidine 89 functions as the Proton donor in the catalytic mechanism. Positions 158, 189, and 191 each coordinate Mn(2+). Disordered regions lie at residues 393-434 (ASPI…SPDI) and 487-614 (ALKK…GDYL). The span at 411–425 (PVSSADSVSAVSPES) shows a compositional bias: low complexity. Basic and acidic residues-rich tracts occupy residues 487–502 (ALKKSYEAPDKVREAP), 535–558 (VPEKGGERTELEDDAVNKTEKETG), and 568–591 (GSEKEDADRIEKPAHVPDKAEKPV).

The protein belongs to the MRE11/RAD32 family. As to quaternary structure, homodimer. Forms a heterotetramer composed of two Mre11 subunits and two Rad50 subunits. Mn(2+) is required as a cofactor.

Nuclease activity is regulated by Rad50. Functionally, part of the Rad50/Mre11 complex, which is involved in the early steps of DNA double-strand break (DSB) repair. The complex may facilitate opening of the processed DNA ends to aid in the recruitment of HerA and NurA. Mre11 binds to DSB ends and has both double-stranded 3'-5' exonuclease activity and single-stranded endonuclease activity. This Methanosarcina acetivorans (strain ATCC 35395 / DSM 2834 / JCM 12185 / C2A) protein is DNA double-strand break repair protein Mre11.